Here is a 606-residue protein sequence, read N- to C-terminus: Elongation factor 4 (606 aa).

Residues 10-192 (IRKKNFCIIA…AICKYVPSPR (183 aa)) form the tr-type G domain. Residues 22–27 (DHGKST) and 139–142 (NKID) contribute to the GTP site.

It belongs to the TRAFAC class translation factor GTPase superfamily. Classic translation factor GTPase family. LepA subfamily.

The protein localises to the cell inner membrane. It catalyses the reaction GTP + H2O = GDP + phosphate + H(+). Required for accurate and efficient protein synthesis under certain stress conditions. May act as a fidelity factor of the translation reaction, by catalyzing a one-codon backward translocation of tRNAs on improperly translocated ribosomes. Back-translocation proceeds from a post-translocation (POST) complex to a pre-translocation (PRE) complex, thus giving elongation factor G a second chance to translocate the tRNAs correctly. Binds to ribosomes in a GTP-dependent manner. This Borreliella burgdorferi (strain ATCC 35210 / DSM 4680 / CIP 102532 / B31) (Borrelia burgdorferi) protein is Elongation factor 4.